Consider the following 51-residue polypeptide: FVNQHLCGSHLVEALYLVCGERGFFYTPKAGIVEQCCAGVCSLYQLENYCN.

3 disulfides stabilise this stretch: Cys7–Cys37, Cys19–Cys50, and Cys36–Cys41.

Belongs to the insulin family. Heterodimer of a B chain and an A chain linked by two disulfide bonds.

The protein resides in the secreted. Functionally, insulin decreases blood glucose concentration. It increases cell permeability to monosaccharides, amino acids and fatty acids. It accelerates glycolysis, the pentose phosphate cycle, and glycogen synthesis in liver. This chain is Insulin (INS), found in Capra hircus (Goat).